A 103-amino-acid chain; its full sequence is Acylphosphatase-2 (103 aa).

At Ser2 the chain carries N-acetylserine. The 91-residue stretch at 13 to 103 (SVDYEVFGRV…LDFSGFSTRY (91 aa)) folds into the Acylphosphatase-like domain. Cys26 carries the post-translational modification S-glutathionyl cysteine; alternate. Catalysis depends on residues Arg28 and Asn46.

It belongs to the acylphosphatase family. Monomer (TU1) or homodimer (TU3) in absence of reducing factors; disulfide linked.

It catalyses the reaction an acyl phosphate + H2O = a carboxylate + phosphate + H(+). Functionally, its physiological role is not yet clear. The chain is Acylphosphatase-2 (ACYP2) from Meleagris gallopavo (Wild turkey).